We begin with the raw amino-acid sequence, 56 residues long: Large ribosomal subunit protein bL32c (56 aa).

Residues 1-20 (MAAPKKRTSKSRKNMRKSTW) show a composition bias toward basic residues. The disordered stretch occupies residues 1 to 28 (MAAPKKRTSKSRKNMRKSTWKRQAATQA).

It belongs to the bacterial ribosomal protein bL32 family.

The protein resides in the plastid. It is found in the chloroplast. This chain is Large ribosomal subunit protein bL32c (rpl32), found in Mesostigma viride (Green alga).